The following is a 464-amino-acid chain: L-cystine uptake protein TcyP (464 aa).

10 helical membrane passes run threonine 3–methionine 23, valine 34–proline 54, tyrosine 73–phenylalanine 93, glycine 107–alanine 127, proline 184–valine 204, isoleucine 225–methionine 245, phenylalanine 263–alanine 283, alanine 347–leucine 367, phenylalanine 371–glycine 391, and phenylalanine 395–isoleucine 415.

This sequence belongs to the dicarboxylate/amino acid:cation symporter (DAACS) (TC 2.A.23) family.

Its subcellular location is the membrane. In terms of biological role, mediates uptake of L-cystine, the oxidized form of L-cysteine. This is L-cystine uptake protein TcyP from Bacillus thuringiensis (strain Al Hakam).